Consider the following 202-residue polypeptide: Dephospho-CoA kinase (202 aa).

Residues 5–202 form the DPCK domain; that stretch reads ILGLTGGIGS…FYLTLRGGQP (198 aa). 13–18 is an ATP binding site; that stretch reads GSGKSA.

This sequence belongs to the CoaE family.

It is found in the cytoplasm. The enzyme catalyses 3'-dephospho-CoA + ATP = ADP + CoA + H(+). The protein operates within cofactor biosynthesis; coenzyme A biosynthesis; CoA from (R)-pantothenate: step 5/5. Catalyzes the phosphorylation of the 3'-hydroxyl group of dephosphocoenzyme A to form coenzyme A. The polypeptide is Dephospho-CoA kinase (Stutzerimonas stutzeri (Pseudomonas stutzeri)).